The primary structure comprises 103 residues: N(4)-acetylcytidine amidohydrolase (103 aa).

Residues 6–101 (ITFFQRFQDD…QTQFYVIEFK (96 aa)) form the ASCH domain. Lys21 acts as the Proton acceptor in catalysis. Thr24 acts as the Nucleophile in catalysis. The active-site Proton donor is Glu74.

This sequence belongs to the N(4)-acetylcytidine amidohydrolase family.

The catalysed reaction is N(4)-acetylcytidine + H2O = cytidine + acetate + H(+). It carries out the reaction N(4)-acetyl-2'-deoxycytidine + H2O = 2'-deoxycytidine + acetate + H(+). The enzyme catalyses N(4)-acetylcytosine + H2O = cytosine + acetate + H(+). Functionally, catalyzes the hydrolysis of N(4)-acetylcytidine (ac4C). In Escherichia coli (strain K12 / MC4100 / BW2952), this protein is N(4)-acetylcytidine amidohydrolase (yqfB).